The primary structure comprises 132 residues: MAKGPNNAARARKKVKKNVADGIAHVHASFNNTIITITDRQGNALSWATAGGQGFKGSRKSTPFAAQVAAENAGRVAQDQGIKNLEVRIKGPGPGRESAVRALNALGIKIAIIEDVTPIPHNGCRPPKRRRI.

This sequence belongs to the universal ribosomal protein uS11 family. As to quaternary structure, part of the 30S ribosomal subunit. Interacts with proteins S7 and S18. Binds to IF-3.

In terms of biological role, located on the platform of the 30S subunit, it bridges several disparate RNA helices of the 16S rRNA. Forms part of the Shine-Dalgarno cleft in the 70S ribosome. The sequence is that of Small ribosomal subunit protein uS11 from Cupriavidus pinatubonensis (strain JMP 134 / LMG 1197) (Cupriavidus necator (strain JMP 134)).